We begin with the raw amino-acid sequence, 324 residues long: Integrin-binding sialoprotein (324 aa).

Positions 1 to 16 (MKTALILLSILGMACA) are cleaved as a signal peptide. Phosphoserine is present on residues Ser-31, Ser-67, Ser-75, Ser-76, and Ser-95. 2 disordered regions span residues 60 to 228 (VQGG…GREL) and 243 to 263 (QQTTPPPEAYGTTSPPIRKSS). Residues 66-105 (SSEENGDGDSSEEEGEEEETSNEEENNEDSEGNEDQEAEA) are compositionally biased toward acidic residues. Residues 106 to 130 (ENSTLSTLSGVTASYGAETTPQAQT) are compositionally biased toward polar residues. N-linked (GlcNAc...) asparagine glycosylation is present at Asn-107. The span at 141-154 (KAGDAESRAPKVKE) shows a compositional bias: basic and acidic residues. A Phosphoserine modification is found at Ser-155. Positions 155-179 (SDEEEEEEEEEEENENEEAEVDENE) are enriched in acidic residues. Residues Asn-183, Asn-188, and Asn-196 are each glycosylated (N-linked (GlcNAc...) asparagine). A compositionally biased stretch (acidic residues) spans 203 to 213 (NGEEAEAEEAS). A compositionally biased stretch (polar residues) spans 253–263 (GTTSPPIRKSS). The short motif at 293 to 295 (RGD) is the Integrin-binding motif element. A sulfotyrosine mark is found at Tyr-320 and Tyr-321.

In terms of assembly, monomer. Interacts with integrins; the interaction promotes cell adhesion.

It is found in the secreted. In terms of biological role, binds tightly to hydroxyapatite. Appears to form an integral part of the mineralized matrix. Probably important to cell-matrix interaction. Promotes adhesion and migration of various cells via the alpha-V/beta-3 integrin receptor (ITGAV:ITGB3). This Mus musculus (Mouse) protein is Integrin-binding sialoprotein (Ibsp).